Here is a 130-residue protein sequence, read N- to C-terminus: Small ribosomal subunit protein uS8 (130 aa).

It belongs to the universal ribosomal protein uS8 family.

Its subcellular location is the cytoplasm. The sequence is that of Small ribosomal subunit protein uS8 (RPS15A) from Brassica napus (Rape).